The following is a 49-amino-acid chain: Large ribosomal subunit protein bL33C (49 aa).

A disordered region spans residues asparagine 20 to lysine 49. Residues asparagine 25 to lysine 49 are compositionally biased toward basic and acidic residues.

It belongs to the bacterial ribosomal protein bL33 family.

This chain is Large ribosomal subunit protein bL33C (rpmG3), found in Enterococcus faecalis (strain ATCC 700802 / V583).